A 57-amino-acid polypeptide reads, in one-letter code: Potassium channel toxin alpha-KTx 8.8 (57 aa).

A signal peptide spans 1–19; it reads MCRLYAIILIVLVMNVIMT. The propeptide occupies 20-28; the sequence is IIPDSKVEV. 3 disulfides stabilise this stretch: Cys31–Cys47, Cys34–Cys52, and Cys38–Cys54.

The protein belongs to the short scorpion toxin superfamily. Potassium channel inhibitor family. Alpha-KTx 08 subfamily. Post-translationally, contains 3 disulfide bonds. Expressed by the venom gland.

The protein resides in the secreted. Its function is as follows. Selectively inhibits voltage-gated potassium channels rKv1.2/KCNA2 (IC(50)=331 nM) and hKv1.3/KCNA3 (IC(50)=503 nM). Partially inihibts rKv1.6/KCNA6 (IC(50)=9983 nM). This is Potassium channel toxin alpha-KTx 8.8 from Orthochirus scrobiculosus (Central Asian scorpion).